The chain runs to 114 residues: uncharacterized protein (114 aa).

Residues 1-114 (MSTAASSRMR…HASQSPDTAY (114 aa)) form a disordered region. Over residues 32–43 (CRRVPSRPCRPV) the composition is skewed to low complexity.

This is an uncharacterized protein from Human adenovirus B serotype 7 (HAdV-7).